The primary structure comprises 20 residues: Putative antimicrobial protein 2 (20 aa).

Positions 1-20 are disordered; that stretch reads DLPECCSATELELDSGKQTS.

In terms of biological role, may have antimicrobial activity. The chain is Putative antimicrobial protein 2 from Cenchritis muricatus (Beaded periwinkle).